Here is a 175-residue protein sequence, read N- to C-terminus: ATP synthase subunit b (175 aa).

Residues 18–38 form a helical membrane-spanning segment; sequence VTSWEPFVANLIAFILMVVIL.

This sequence belongs to the ATPase B chain family. F-type ATPases have 2 components, F(1) - the catalytic core - and F(0) - the membrane proton channel. F(1) has five subunits: alpha(3), beta(3), gamma(1), delta(1), epsilon(1). F(0) has three main subunits: a(1), b(2) and c(10-14). The alpha and beta chains form an alternating ring which encloses part of the gamma chain. F(1) is attached to F(0) by a central stalk formed by the gamma and epsilon chains, while a peripheral stalk is formed by the delta and b chains.

It localises to the cell inner membrane. F(1)F(0) ATP synthase produces ATP from ADP in the presence of a proton or sodium gradient. F-type ATPases consist of two structural domains, F(1) containing the extramembraneous catalytic core and F(0) containing the membrane proton channel, linked together by a central stalk and a peripheral stalk. During catalysis, ATP synthesis in the catalytic domain of F(1) is coupled via a rotary mechanism of the central stalk subunits to proton translocation. In terms of biological role, component of the F(0) channel, it forms part of the peripheral stalk, linking F(1) to F(0). The sequence is that of ATP synthase subunit b from Akkermansia muciniphila (strain ATCC BAA-835 / DSM 22959 / JCM 33894 / BCRC 81048 / CCUG 64013 / CIP 107961 / Muc).